The primary structure comprises 220 residues: Phosphatidylinositol phosphate synthase (220 aa).

Transmembrane regions (helical) follow at residues 21 to 46 and 52 to 72; these read LLRAGFTPDTVTIFGTAASVVAALTL and LFWGGMAVWLFAMFDMLDGAM. 29–32 is an a CDP-1,2-diacyl-sn-glycerol binding site; that stretch reads DTVT. Mg(2+) is bound by residues Asp-66 and Asp-69. Residues Gly-70, Arg-74, and Thr-80 each contribute to the a CDP-1,2-diacyl-sn-glycerol site. Mg(2+) contacts are provided by Asp-87 and Asp-91. The active-site Proton acceptor is the Asp-91. A run of 4 helical transmembrane segments spans residues 93–110, 116–134, 154–171, and 177–194; these read VADGAVFAGLVWWAAFGW, VVATLICMITSQVISYVKA, LIIVLAGAIFSGGFGVQW, and MWVLAVASLVTVAQRMHA.

The protein belongs to the CDP-alcohol phosphatidyltransferase class-I family. As to quaternary structure, homodimer. Mg(2+) serves as cofactor.

Its subcellular location is the cell membrane. It catalyses the reaction a CDP-1,2-diacyl-sn-glycerol + 1D-myo-inositol 3-phosphate = a 1,2-diacyl-sn-glycero-3-phospho-(1D-myo-inositol-3-phosphate) + CMP + H(+). It carries out the reaction 1,2-di-(9Z-octadecenoyl)-sn-glycero-3-cytidine-5'-diphosphate + 1D-myo-inositol 3-phosphate = 1,2-di-(9Z-octadecenoyl)-sn-glycero-3-phospho-(1D-myo-inositol-3-phosphate) + CMP + H(+). It functions in the pathway phospholipid metabolism; phosphatidylinositol phosphate biosynthesis. Catalyzes the conjugation of the 1'-hydroxyl group of D-myo-inositol-3-phosphate (also named L-myo-inositol-1-phosphate) with a lipid tail of cytidine diphosphate diacylglycerol (CDP-DAG), forming phosphatidylinositol phosphate (PIP) and CMP. PIP is a precursor of phosphatidylinositol (PI) which is an essential lipid for mycobacteria required for formation of their cell wall. The chain is Phosphatidylinositol phosphate synthase from Mycobacteroides abscessus (strain ATCC 19977 / DSM 44196 / CCUG 20993 / CIP 104536 / JCM 13569 / NCTC 13031 / TMC 1543 / L948) (Mycobacterium abscessus).